A 64-amino-acid chain; its full sequence is Beta-defensin 1 (64 aa).

Residues 1-20 form the signal peptide; that stretch reads MRLHHLLLVLFFLVLSAGSG. Positions 21-26 are excised as a propeptide; it reads FTQGIR. 3 disulfides stabilise this stretch: Cys-31-Cys-60, Cys-38-Cys-53, and Cys-43-Cys-61.

Belongs to the beta-defensin family. As to quaternary structure, monomer. Homodimer.

The protein resides in the secreted. Its subcellular location is the membrane. Functionally, has bactericidal activity. May act as a ligand for C-C chemokine receptor CCR6. Positively regulates the sperm motility and bactericidal activity in a CCR6-dependent manner. Binds to CCR6 and triggers Ca2+ mobilization in the sperm which is important for its motility. This is Beta-defensin 1 (DEFB1) from Capra hircus (Goat).